A 251-amino-acid polypeptide reads, in one-letter code: Putative F-box protein L166 (251 aa).

The F-box domain occupies M1–I46. Residues P188 to R251 are disordered. The span at T202–I217 shows a compositional bias: polar residues. Residues K241–R251 are compositionally biased toward basic residues.

This chain is Putative F-box protein L166, found in Acanthamoeba polyphaga (Amoeba).